The primary structure comprises 265 residues: Eukaryotic translation initiation factor 3 subunit J (265 aa).

A disordered region spans residues 1-71 (MSWDDEAING…KESSADRALL (71 aa)). Acidic residues predominate over residues 23-32 (WDAEIGDDEP). Residues 42–71 (EEKKPAPKPKKEQPKKVKKGKESSADRALL) show a composition bias toward basic and acidic residues. At S65 the chain carries Phosphoserine. T75 carries the post-translational modification Phosphothreonine. At S92 the chain carries Phosphoserine. The segment at 219–265 (VRGGTATGGAGKKKVKGKTNLGGAFKKDQDFDLDGPDDFEFGDDDFM) is disordered. Residue R220 is modified to Omega-N-methylarginine. The span at 249–265 (FDLDGPDDFEFGDDDFM) shows a compositional bias: acidic residues.

It belongs to the eIF-3 subunit J family. Probable component of the eukaryotic translation initiation factor 3 (eIF-3) complex. Is not part of the eIF-3 core complex, with which it is associated in substochiometric amounts.

It localises to the cytoplasm. In terms of biological role, component of the eukaryotic translation initiation factor 3 (eIF-3) complex, which is involved in protein synthesis of a specialized repertoire of mRNAs and, together with other initiation factors, stimulates binding of mRNA and methionyl-tRNAi to the 40S ribosome. The eIF-3 complex specifically targets and initiates translation of a subset of mRNAs involved in cell proliferation. This is Eukaryotic translation initiation factor 3 subunit J from Saccharomyces cerevisiae (strain ATCC 204508 / S288c) (Baker's yeast).